Here is a 244-residue protein sequence, read N- to C-terminus: Phosphoribosylaminoimidazole-succinocarboxamide synthase (244 aa).

The protein belongs to the SAICAR synthetase family.

It catalyses the reaction 5-amino-1-(5-phospho-D-ribosyl)imidazole-4-carboxylate + L-aspartate + ATP = (2S)-2-[5-amino-1-(5-phospho-beta-D-ribosyl)imidazole-4-carboxamido]succinate + ADP + phosphate + 2 H(+). The protein operates within purine metabolism; IMP biosynthesis via de novo pathway; 5-amino-1-(5-phospho-D-ribosyl)imidazole-4-carboxamide from 5-amino-1-(5-phospho-D-ribosyl)imidazole-4-carboxylate: step 1/2. In Prochlorococcus marinus (strain SARG / CCMP1375 / SS120), this protein is Phosphoribosylaminoimidazole-succinocarboxamide synthase.